A 345-amino-acid chain; its full sequence is Achaete-scute complex protein T4 (345 aa).

Residues S78–P92 are compositionally biased toward low complexity. Residues S78–R109 form a disordered region. The region spanning Q99 to L162 is the bHLH domain.

Efficient DNA binding requires dimerization with another bHLH protein. Interacts with da (via bHLH motif). Interacts with Bap60. L(1)SC, SC and AC strongly label the presumptive stomatogastric nervous system, while ASE is more prominent in the presumptive procephalic lobe. Associates with the somatic nuclei through nuclear cycles 9 and 10. During nuclear cycle 11 distributes uniformly in the embryo.

In terms of biological role, AS-C proteins are involved in the determination of the neuronal precursors in the peripheral nervous system and the central nervous system. Also involved in sex determination and dosage compensation. The chain is Achaete-scute complex protein T4 (sc) from Drosophila melanogaster (Fruit fly).